The chain runs to 101 residues: Large ribosomal subunit protein uL23 (101 aa).

This sequence belongs to the universal ribosomal protein uL23 family. Part of the 50S ribosomal subunit. Contacts protein L29, and trigger factor when it is bound to the ribosome.

Functionally, one of the early assembly proteins it binds 23S rRNA. One of the proteins that surrounds the polypeptide exit tunnel on the outside of the ribosome. Forms the main docking site for trigger factor binding to the ribosome. This is Large ribosomal subunit protein uL23 from Rhodococcus erythropolis (strain PR4 / NBRC 100887).